We begin with the raw amino-acid sequence, 103 residues long: Small ribosomal subunit protein uS10 (103 aa).

This sequence belongs to the universal ribosomal protein uS10 family. As to quaternary structure, part of the 30S ribosomal subunit.

Involved in the binding of tRNA to the ribosomes. In Xylella fastidiosa (strain 9a5c), this protein is Small ribosomal subunit protein uS10.